Reading from the N-terminus, the 417-residue chain is Gamma-glutamyl phosphate reductase (417 aa).

Belongs to the gamma-glutamyl phosphate reductase family.

The protein resides in the cytoplasm. The catalysed reaction is L-glutamate 5-semialdehyde + phosphate + NADP(+) = L-glutamyl 5-phosphate + NADPH + H(+). The protein operates within amino-acid biosynthesis; L-proline biosynthesis; L-glutamate 5-semialdehyde from L-glutamate: step 2/2. Its function is as follows. Catalyzes the NADPH-dependent reduction of L-glutamate 5-phosphate into L-glutamate 5-semialdehyde and phosphate. The product spontaneously undergoes cyclization to form 1-pyrroline-5-carboxylate. The sequence is that of Gamma-glutamyl phosphate reductase from Escherichia coli (strain K12 / MC4100 / BW2952).